A 970-amino-acid polypeptide reads, in one-letter code: Cullin-4B (970 aa).

Residues 1–14 are compositionally biased toward basic and acidic residues; sequence MSRSTRSKERREND. Disordered stretches follow at residues 1-157 and 189-211; these read MSRS…SFCL and AEES…QQQQ. Thr-15 bears the Phosphothreonine mark. Residue Ser-17 is modified to Phosphoserine. Over residues 36–57 the composition is skewed to pro residues; it reads PPRPPYPPLLPPVFPPPTPPPQ. Low complexity predominate over residues 78–98; it reads SGFSSPNPSAASAAAQEVRSA. The segment covering 99–109 has biased composition (polar residues); it reads TDGNTSTTPPT. Residue Thr-106 is modified to Phosphothreonine. Ser-110 is subject to Phosphoserine. A Nuclear localization signal motif is present at residues 112–115; sequence KKRK. Residues 117–126 are compositionally biased toward low complexity; that stretch reads NSSSSSSNSS. The span at 146 to 155 shows a compositional bias: polar residues; that stretch reads DSASPSTSSF. Phosphoserine occurs at positions 154 and 200. The span at 192 to 211 shows a compositional bias: low complexity; that stretch reads SSSSSSSSSPTAATSQQQQQ. Position 202 is a phosphothreonine (Thr-202). A Glycyl lysine isopeptide (Lys-Gly) (interchain with G-Cter in ubiquitin) cross-link involves residue Lys-247. Phosphoserine is present on Ser-250. The Cullin neddylation domain occupies 902-962; sequence DRQYQIDAAI…RDYMERDKEN (61 aa). A Glycyl lysine isopeptide (Lys-Gly) (interchain with G-Cter in NEDD8) cross-link involves residue Lys-916.

The protein belongs to the cullin family. As to quaternary structure, component of multiple DCX (DDB1-CUL4-X-box) E3 ubiquitin-protein ligase complexes that seem to be formed of DDB1, CUL4A or CUL4B, RBX1 and a variable substrate recognition component which seems to belong to a protein family described as DCAF (Ddb1- and Cul4-associated factor) or CDW (CUL4-DDB1-associated WD40-repeat) proteins. Component of the DCX(DTL) complex with the putative substrate recognition component DTL. Component of the DCX(DDB2) complex with the putative substrate recognition component DDB2. Component of DCX complexes part of the DesCEND (destruction via C-end degrons) pathway, which contain either TRPC4AP or DCAF12 as substrate-recognition component. Component of the DCX(AMBRA1) complex with the substrate recognition component AMBRA1. Part of a complex with RBX1 and TIP120A/CAND1. Component of the DCX(WDR77) complex, composed of Cul4b, Ddb1, Wdr77 and Rbx1. Interacts with RBX1, GRWD1, MLST8, SMU1, TLE2, TLE3, DCAF1, DDA1, DCAF6, DCAF17, DDB2, DCAF8, TIP120A/CAND1 and TMEM113. Interacts with cyclin E (CCNE1 or CCNE2) and with importins alpha-1 (KPNA2), alpha-3 (KPNA4), alpha-5 (KPNA1) and beta-1 (KPNB1). May interact with WDR26, WDR51B, SNRNP40, WDR61, WDR76 and WDR5. Interacts (unneddylated form) with DCUN1D1, DCUN1D2, DCUN1D3, DCUN1D4 and DCUN1D5; these interactions promote the cullin neddylation. In terms of processing, neddylated. Deneddylated via its interaction with the COP9 signalosome (CSN) complex. Expressed in oocytes (at protein level).

It is found in the cytoplasm. Its subcellular location is the nucleus. The protein operates within protein modification; protein ubiquitination. In terms of biological role, core component of multiple cullin-RING-based E3 ubiquitin-protein ligase complexes which mediate the ubiquitination and subsequent proteasomal degradation of target proteins. The functional specificity of the E3 ubiquitin-protein ligase complex depends on the variable substrate recognition subunit. CUL4B may act within the complex as a scaffold protein, contributing to catalysis through positioning of the substrate and the ubiquitin-conjugating enzyme. Plays a role as part of the E3 ubiquitin-protein ligase complex in polyubiquitination of CDT1, histone H2A, histone H3 and histone H4 in response to radiation-induced DNA damage. Targeted to UV damaged chromatin by DDB2 and may be important for DNA repair and DNA replication. A number of DCX complexes (containing either TRPC4AP or DCAF12 as substrate-recognition component) are part of the DesCEND (destruction via C-end degrons) pathway, which recognizes a C-degron located at the extreme C terminus of target proteins, leading to their ubiquitination and degradation. The DCX(AMBRA1) complex is a master regulator of the transition from G1 to S cell phase by mediating ubiquitination of phosphorylated cyclin-D (CCND1, CCND2 and CCND3). The DCX(AMBRA1) complex also acts as a regulator of Cul5-RING (CRL5) E3 ubiquitin-protein ligase complexes by mediating ubiquitination and degradation of Elongin-C (ELOC) component of CRL5 complexes. Required for ubiquitination of cyclin E (CCNE1 or CCNE2), and consequently, normal G1 cell cycle progression. Component of the DCX(WDR77) complex, which mediates ubiquitination and degradation of Irgm1 in intestinal cells. Regulates the mammalian target-of-rapamycin (mTOR) pathway involved in control of cell growth, size and metabolism. Specific CUL4B regulation of the mTORC1-mediated pathway is dependent upon 26S proteasome function and requires interaction between CUL4B and MLST8. With CUL4A, contributes to ribosome biogenesis. This chain is Cullin-4B, found in Mus musculus (Mouse).